A 612-amino-acid chain; its full sequence is Threonine--tRNA ligase (612 aa).

The interval 218-509 (DHRKLGVELG…LSEHFGGNFP (292 aa)) is catalytic. C310, H361, and H486 together coordinate Zn(2+).

It belongs to the class-II aminoacyl-tRNA synthetase family. In terms of assembly, homodimer. The cofactor is Zn(2+).

Its subcellular location is the cytoplasm. The catalysed reaction is tRNA(Thr) + L-threonine + ATP = L-threonyl-tRNA(Thr) + AMP + diphosphate + H(+). Functionally, catalyzes the attachment of threonine to tRNA(Thr) in a two-step reaction: L-threonine is first activated by ATP to form Thr-AMP and then transferred to the acceptor end of tRNA(Thr). Also edits incorrectly charged L-seryl-tRNA(Thr). In Helicobacter pylori (strain P12), this protein is Threonine--tRNA ligase.